Consider the following 112-residue polypeptide: MTRCALLLLMVLMLGRVLVVPVTPIPTFQLRPQNSPQTTPRPAASESPSAAPTWPWAAQSHCSPTRHPGSRIVLSLDVPIGLLQILLEQARARAAREQATTNARILARVGHC.

The N-terminal stretch at 1–22 (MTRCALLLLMVLMLGRVLVVPV) is a signal peptide. Positions 23–70 (TPIPTFQLRPQNSPQTTPRPAASESPSAAPTWPWAAQSHCSPTRHPGS) are excised as a propeptide. A disordered region spans residues 27-66 (TFQLRPQNSPQTTPRPAASESPSAAPTWPWAAQSHCSPTR). Low complexity predominate over residues 38-58 (TTPRPAASESPSAAPTWPWAA).

The protein belongs to the sauvagine/corticotropin-releasing factor/urotensin I family. As to quaternary structure, binds with high affinity to CRF receptors 2-alpha and 2-beta. Glycosylated.

It is found in the secreted. Functionally, suppresses food intake, delays gastric emptying and decreases heat-induced edema. Might represent an endogenous ligand for maintaining homeostasis after stress. This chain is Urocortin-2 (UCN2), found in Homo sapiens (Human).